Reading from the N-terminus, the 689-residue chain is DNA topoisomerase 1 (689 aa).

The region spanning 3 to 113 is the Toprim domain; it reads DNLVIVESPA…KENRVVFNEI (111 aa). The Mg(2+) site is built by E9 and D82. Residues 129-557 form the Topo IA-type catalytic domain; that stretch reads EMNLVDAQQA…FFSSFKQDVE (429 aa). Positions 163-168 are interaction with DNA; sequence SAGRVQ. Y298 serves as the catalytic O-(5'-phospho-DNA)-tyrosine intermediate. Residues 328-356 are disordered; that stretch reads SKRKASGKQGDQDAHEAIRPSSTMRTPDD. C4-type zinc fingers lie at residues 577-603, 617-645, and 658-681; these read CEIC…FPDC, CPKC…YPEC, and CPKC…CSNC.

It belongs to the type IA topoisomerase family. In terms of assembly, monomer. Requires Mg(2+) as cofactor.

It carries out the reaction ATP-independent breakage of single-stranded DNA, followed by passage and rejoining.. Functionally, releases the supercoiling and torsional tension of DNA, which is introduced during the DNA replication and transcription, by transiently cleaving and rejoining one strand of the DNA duplex. Introduces a single-strand break via transesterification at a target site in duplex DNA. The scissile phosphodiester is attacked by the catalytic tyrosine of the enzyme, resulting in the formation of a DNA-(5'-phosphotyrosyl)-enzyme intermediate and the expulsion of a 3'-OH DNA strand. The free DNA strand then undergoes passage around the unbroken strand, thus removing DNA supercoils. Finally, in the religation step, the DNA 3'-OH attacks the covalent intermediate to expel the active-site tyrosine and restore the DNA phosphodiester backbone. This is DNA topoisomerase 1 from Staphylococcus aureus (strain USA300).